Reading from the N-terminus, the 323-residue chain is NADH-ubiquinone oxidoreductase chain 1 (323 aa).

The next 8 helical transmembrane spans lie at 8–28 (LINP…LTLI), 75–95 (MFLI…APLP), 105–125 (LGIL…LGSG), 151–171 (LGLI…TTLM), 177–197 (MWLI…TLAE), 234–254 (ANIL…SSFM), 258–278 (ELTT…FLWV), and 298–318 (FLPI…SMLG).

This sequence belongs to the complex I subunit 1 family. As to quaternary structure, core subunit of respiratory chain NADH dehydrogenase (Complex I) which is composed of 45 different subunits.

The protein localises to the mitochondrion inner membrane. It carries out the reaction a ubiquinone + NADH + 5 H(+)(in) = a ubiquinol + NAD(+) + 4 H(+)(out). Core subunit of the mitochondrial membrane respiratory chain NADH dehydrogenase (Complex I) which catalyzes electron transfer from NADH through the respiratory chain, using ubiquinone as an electron acceptor. Essential for the catalytic activity and assembly of complex I. In Xenopus laevis (African clawed frog), this protein is NADH-ubiquinone oxidoreductase chain 1 (mt-nd1).